Reading from the N-terminus, the 409-residue chain is Coagulation factor IX (409 aa).

Residues Tyr1, Asn2, Glu7, Glu8, Glu16, Glu18, Glu21, Glu22, Glu27, Glu28, and Glu31 each coordinate Ca(2+). Residues 1 to 47 enclose the Gla domain; the sequence is YNSGKLEESFVRGNLERECIEEKCSFEEAREVFENTEKTNEFWKQYV. A 4-carboxyglutamate mark is found at Glu7, Glu8, Glu16, Glu18, Glu21, Glu22, Glu27, Glu28, Glu31, Glu34, Glu37, and Glu41. Glu16 serves as a coordination point for Mg(2+). The cysteines at positions 19 and 24 are disulfide-linked. Glu21 provides a ligand contact to Mg(2+). Mg(2+) is bound at residue Glu27. Mg(2+) is bound at residue Glu31. Glu37, Glu41, Asp48, Gly49, and Gln51 together coordinate Ca(2+). The Mg(2+) site is built by Glu37 and Glu41. One can recognise an EGF-like 1; calcium-binding domain in the interval 48–84; that stretch reads DGDQCEPNPCLNGGLCKDDINSYECWCQVGFEGKNCE. Disulfide bonds link Cys52–Cys63, Cys57–Cys72, Cys74–Cys83, Cys89–Cys100, Cys96–Cys110, Cys112–Cys125, Cys133–Cys291, Cys208–Cys224, Cys338–Cys352, and Cys363–Cys391. Ca(2+)-binding residues include Asp65 and Asp66. Asp65 is modified ((3R)-3-hydroxyaspartate). Ser69 is modified (phosphoserine). The region spanning 85 to 126 is the EGF-like 2 domain; it reads LDATCNIKNGRCKQFCKTGADSKVLCSCTTGYRLAPDQKSCK. A propeptide spans 148 to 182 (activation peptide); the sequence is AEIIFSNMDYENSTEVEPILDSLTESNQSSDDFIR. At Tyr157 the chain carries Sulfotyrosine. Ser160 bears the Phosphoserine mark. A Phosphothreonine; alternate modification is found at Thr161. An O-linked (GalNAc...) threonine; alternate glycan is attached at Thr161. Thr171 carries O-linked (GalNAc...) threonine glycosylation. Asn174 is a glycosylation site (N-linked (GlcNAc...) asparagine). The region spanning 183 to 409 is the Peptidase S1 domain; sequence IVGGENAKPG…YTKVSRYVNW (227 aa). His223 serves as the catalytic Charge relay system. The Ca(2+) site is built by Glu237, Asn239, Glu242, Glu244, and Glu247. Asn262 is a glycosylation site (N-linked (GlcNAc...) asparagine). Asp271 (charge relay system) is an active-site residue. The Charge relay system role is filled by Ser367.

It belongs to the peptidase S1 family. As to quaternary structure, heterodimer of a light chain and a heavy chain; disulfide-linked. Interacts (inactive and activated) with F11 (activated) in calcium-dependent manner. Interacts with SERPINC1. In terms of processing, activated by factor XIa, which excises the activation peptide. The propeptide can also be removed by snake venom protease. Activated by coagulation factor VIIa-tissue factor (F7-F3) complex in calcium-dependent manner. Post-translationally, the iron and 2-oxoglutarate dependent 3-hydroxylation of aspartate and asparagine is (R) stereospecific within EGF domains.

It localises to the secreted. The catalysed reaction is Selective cleavage of Arg-|-Ile bond in factor X to form factor Xa.. Functionally, factor IX is a vitamin K-dependent plasma protein that participates in the intrinsic pathway of blood coagulation by converting factor X to its active form in the presence of Ca(2+) ions, phospholipids, and factor VIIIa. The polypeptide is Coagulation factor IX (F9) (Sus scrofa (Pig)).